Here is a 168-residue protein sequence, read N- to C-terminus: Photosystem I assembly protein Ycf3 (168 aa).

TPR repeat units follow at residues 35–68 (AFTY…EIDP), 72–105 (SYIL…NPFL), and 120–153 (GEQA…TPGN).

It belongs to the Ycf3 family.

The protein resides in the plastid. The protein localises to the chloroplast thylakoid membrane. Functionally, essential for the assembly of the photosystem I (PSI) complex. May act as a chaperone-like factor to guide the assembly of the PSI subunits. This chain is Photosystem I assembly protein Ycf3, found in Lactuca sativa (Garden lettuce).